Reading from the N-terminus, the 264-residue chain is uncharacterized protein (264 aa).

Transmembrane regions (helical) follow at residues 19–39, 42–62, 69–89, 100–120, 136–156, 160–180, 192–212, and 223–243; these read LFPA…LPFL, YDWL…SGLE, VITL…HMGS, IFGV…YLCQ, FAVV…HFSI, WWLS…YEVN, FILI…FGAW, and LVHL…FLIV.

It is found in the cell membrane. This is an uncharacterized protein from Bacillus subtilis (strain 168).